Consider the following 494-residue polypeptide: Guanosine-5'-triphosphate,3'-diphosphate pyrophosphatase (494 aa).

This sequence belongs to the GppA/Ppx family. GppA subfamily.

It catalyses the reaction guanosine 3'-diphosphate 5'-triphosphate + H2O = guanosine 3',5'-bis(diphosphate) + phosphate + H(+). The protein operates within purine metabolism; ppGpp biosynthesis; ppGpp from GTP: step 2/2. Its function is as follows. Catalyzes the conversion of pppGpp to ppGpp. Guanosine pentaphosphate (pppGpp) is a cytoplasmic signaling molecule which together with ppGpp controls the 'stringent response', an adaptive process that allows bacteria to respond to amino acid starvation, resulting in the coordinated regulation of numerous cellular activities. This chain is Guanosine-5'-triphosphate,3'-diphosphate pyrophosphatase, found in Escherichia coli O139:H28 (strain E24377A / ETEC).